The primary structure comprises 156 residues: S-ribosylhomocysteine lyase (156 aa).

Fe cation is bound by residues His54, His58, and Cys126.

The protein belongs to the LuxS family. As to quaternary structure, homodimer. It depends on Fe cation as a cofactor.

The catalysed reaction is S-(5-deoxy-D-ribos-5-yl)-L-homocysteine = (S)-4,5-dihydroxypentane-2,3-dione + L-homocysteine. Involved in the synthesis of autoinducer 2 (AI-2) which is secreted by bacteria and is used to communicate both the cell density and the metabolic potential of the environment. The regulation of gene expression in response to changes in cell density is called quorum sensing. Catalyzes the transformation of S-ribosylhomocysteine (RHC) to homocysteine (HC) and 4,5-dihydroxy-2,3-pentadione (DPD). The polypeptide is S-ribosylhomocysteine lyase (Shouchella clausii (strain KSM-K16) (Alkalihalobacillus clausii)).